The primary structure comprises 241 residues: 2-C-methyl-D-erythritol 4-phosphate cytidylyltransferase (241 aa).

It belongs to the IspD/TarI cytidylyltransferase family. IspD subfamily.

The enzyme catalyses 2-C-methyl-D-erythritol 4-phosphate + CTP + H(+) = 4-CDP-2-C-methyl-D-erythritol + diphosphate. The protein operates within isoprenoid biosynthesis; isopentenyl diphosphate biosynthesis via DXP pathway; isopentenyl diphosphate from 1-deoxy-D-xylulose 5-phosphate: step 2/6. In terms of biological role, catalyzes the formation of 4-diphosphocytidyl-2-C-methyl-D-erythritol from CTP and 2-C-methyl-D-erythritol 4-phosphate (MEP). The chain is 2-C-methyl-D-erythritol 4-phosphate cytidylyltransferase from Mycobacterium leprae (strain Br4923).